A 355-amino-acid polypeptide reads, in one-letter code: Phenylalanine--tRNA ligase alpha subunit (355 aa).

E273 contributes to the Mg(2+) binding site.

The protein belongs to the class-II aminoacyl-tRNA synthetase family. Phe-tRNA synthetase alpha subunit type 1 subfamily. Tetramer of two alpha and two beta subunits. Mg(2+) is required as a cofactor.

The protein localises to the cytoplasm. It carries out the reaction tRNA(Phe) + L-phenylalanine + ATP = L-phenylalanyl-tRNA(Phe) + AMP + diphosphate + H(+). The protein is Phenylalanine--tRNA ligase alpha subunit of Bifidobacterium animalis subsp. lactis (strain AD011).